The following is a 288-amino-acid chain: HTH-type transcriptional regulator CzcR (288 aa).

In terms of domain architecture, HTH lysR-type spans 1-58; it reads MELRDLQIFQSVADQGSVSSAAKELNYVQSNVTTRIKQLENELKTPLFYRHKRGMTLT. The H-T-H motif DNA-binding region spans 18–37; that stretch reads VSSAAKELNYVQSNVTTRIK.

Belongs to the LysR transcriptional regulatory family.

The polypeptide is HTH-type transcriptional regulator CzcR (czcR) (Bacillus thuringiensis subsp. konkukian (strain 97-27)).